The chain runs to 574 residues: Glycine--tRNA ligase (574 aa).

Substrate contacts are provided by R96 and E162. Residues 194 to 196 (RNE), 204 to 209 (IRLREF), 327 to 328 (EC), and 450 to 453 (GIDR) contribute to the ATP site. Substrate is bound at residue 209-213 (FTQAE). Residue 446 to 450 (EPSYG) coordinates substrate.

This sequence belongs to the class-II aminoacyl-tRNA synthetase family.

Its subcellular location is the cytoplasm. The catalysed reaction is tRNA(Gly) + glycine + ATP = glycyl-tRNA(Gly) + AMP + diphosphate. In terms of biological role, catalyzes the attachment of glycine to tRNA(Gly). In Methanococcus maripaludis (strain DSM 14266 / JCM 13030 / NBRC 101832 / S2 / LL), this protein is Glycine--tRNA ligase.